The sequence spans 359 residues: Adenosine 3'-phospho 5'-phosphosulfate transporter 1 (359 aa).

Helical transmembrane passes span 26 to 46 (NMKL…YGIL), 68 to 88 (STFL…VIVL), 157 to 177 (YSIA…GKIS), 184 to 204 (TSYG…TSTF), 228 to 248 (SIIS…IEFI), 254 to 276 (VFFD…YYTI), and 300 to 320 (TLIY…LVFG). Positions 332–359 (KKHGGHSHGGSNAATTTTPSNNSNNTEK) are disordered. Over residues 340–359 (GGSNAATTTTPSNNSNNTEK) the composition is skewed to low complexity.

Belongs to the nucleotide-sugar transporter family. SLC35B subfamily.

The protein localises to the golgi apparatus membrane. The enzyme catalyses 3'-phosphoadenylyl sulfate(in) + adenosine 3',5'-bisphosphate(out) = 3'-phosphoadenylyl sulfate(out) + adenosine 3',5'-bisphosphate(in). Its function is as follows. Probably functions as a 3'-phosphoadenylyl sulfate:adenosine 3',5'-bisphosphate antiporter at the Golgi membranes. Mediates the transport from the cytosol into the lumen of the Golgi of 3'-phosphoadenylyl sulfate/adenosine 3'-phospho 5'-phosphosulfate (PAPS), a universal sulfuryl donor for sulfation events that take place in that compartment. The polypeptide is Adenosine 3'-phospho 5'-phosphosulfate transporter 1 (slc35b2) (Dictyostelium discoideum (Social amoeba)).